An 893-amino-acid chain; its full sequence is Alpha-actinin-1 (893 aa).

An actin-binding region spans residues 1–248; sequence MDHHYDPQQT…IMTYVSSFYH (248 aa). Tyr-13 is subject to Phosphotyrosine; by FAK1. 2 Calponin-homology (CH) domains span residues 32 to 136 and 145 to 251; these read KQQR…LRFA and TSAK…HAFS. Spectrin repeat units lie at residues 275-385, 395-500, 510-621, and 631-734; these read QLME…WLLN, HLAE…ALER, QLYL…ALME, and RLRK…EVEN. EF-hand domains are found at residues 747-782 and 788-823; these read EQMN…LGYD and QGEA…ETAD. 5 residues coordinate Ca(2+): Asp-760, Asp-762, Ser-764, Thr-766, and Glu-771.

Belongs to the alpha-actinin family. Homodimer; antiparallel. Interacts with PDLIM4 (via PDZ domain).

Its subcellular location is the cytoplasm. It is found in the cytoskeleton. The protein resides in the myofibril. The protein localises to the sarcomere. It localises to the z line. Its subcellular location is the cell membrane. It is found in the cell junction. The protein resides in the cell projection. The protein localises to the ruffle. F-actin cross-linking protein is thought to anchor actin to a variety of intracellular structures. This is a bundling protein. The protein is Alpha-actinin-1 (ACTN1) of Gallus gallus (Chicken).